A 95-amino-acid chain; its full sequence is Aspartyl/glutamyl-tRNA(Asn/Gln) amidotransferase subunit C (95 aa).

Belongs to the GatC family. In terms of assembly, heterotrimer of A, B and C subunits.

The catalysed reaction is L-glutamyl-tRNA(Gln) + L-glutamine + ATP + H2O = L-glutaminyl-tRNA(Gln) + L-glutamate + ADP + phosphate + H(+). It carries out the reaction L-aspartyl-tRNA(Asn) + L-glutamine + ATP + H2O = L-asparaginyl-tRNA(Asn) + L-glutamate + ADP + phosphate + 2 H(+). Its function is as follows. Allows the formation of correctly charged Asn-tRNA(Asn) or Gln-tRNA(Gln) through the transamidation of misacylated Asp-tRNA(Asn) or Glu-tRNA(Gln) in organisms which lack either or both of asparaginyl-tRNA or glutaminyl-tRNA synthetases. The reaction takes place in the presence of glutamine and ATP through an activated phospho-Asp-tRNA(Asn) or phospho-Glu-tRNA(Gln). In Chloroherpeton thalassium (strain ATCC 35110 / GB-78), this protein is Aspartyl/glutamyl-tRNA(Asn/Gln) amidotransferase subunit C.